A 129-amino-acid chain; its full sequence is Probable cytochrome b5 2 (129 aa).

Residues 3 to 79 (EKTITVEEVL…LEKFYIGNLL (77 aa)) form the Cytochrome b5 heme-binding domain. Heme-binding residues include histidine 38 and histidine 62. Residues 105–125 (VKPAMWLFVLVMVVAYFAFRK) form a helical membrane-spanning segment.

This sequence belongs to the cytochrome b5 family.

Its subcellular location is the endoplasmic reticulum membrane. The protein localises to the microsome membrane. It is found in the mitochondrion. Functionally, membrane bound hemoprotein which function as an electron carrier for several membrane bound oxygenases. In Schizosaccharomyces pombe (strain 972 / ATCC 24843) (Fission yeast), this protein is Probable cytochrome b5 2 (oca8).